Consider the following 255-residue polypeptide: EEF1A lysine methyltransferase 4 (255 aa).

S-adenosyl-L-methionine contacts are provided by tryptophan 26 and tyrosine 30. Tyrosine 39 carries the post-translational modification Phosphotyrosine. Residues tryptophan 41, glycine 66, 88–89 (DY), 113–114 (DV), and lysine 130 contribute to the S-adenosyl-L-methionine site. Positions 129–134 (EKGTLD) match the Required for methyltransferase activity motif.

This sequence belongs to the methyltransferase superfamily.

The enzyme catalyses L-lysyl-[protein] + S-adenosyl-L-methionine = N(6)-methyl-L-lysyl-[protein] + S-adenosyl-L-homocysteine + H(+). It carries out the reaction N(6)-methyl-L-lysyl-[protein] + S-adenosyl-L-methionine = N(6),N(6)-dimethyl-L-lysyl-[protein] + S-adenosyl-L-homocysteine + H(+). It catalyses the reaction N(6),N(6)-dimethyl-L-lysyl-[protein] + S-adenosyl-L-methionine = N(6),N(6),N(6)-trimethyl-L-lysyl-[protein] + S-adenosyl-L-homocysteine + H(+). Its function is as follows. Protein-lysine methyltransferase that efficiently catalyzes three successive methylations on 'Lys-36' in eukaryotic translation elongation factor 1 alpha (EEF1A1 or EEF1A2). In Mus musculus (Mouse), this protein is EEF1A lysine methyltransferase 4.